A 360-amino-acid chain; its full sequence is Protein Wnt-2 (360 aa).

The first 25 residues, 1–25, serve as a signal peptide directing secretion; sequence MNAPLGGIWLWLPLLLTWLTPEVNS. 11 cysteine pairs are disulfide-bonded: cysteine 76/cysteine 87, cysteine 127/cysteine 135, cysteine 137/cysteine 157, cysteine 206/cysteine 220, cysteine 208/cysteine 215, cysteine 278/cysteine 309, cysteine 294/cysteine 304, cysteine 308/cysteine 348, cysteine 324/cysteine 339, cysteine 326/cysteine 336, and cysteine 331/cysteine 332. Residue serine 212 is the site of O-palmitoleoyl serine; by PORCN attachment. Asparagine 295 carries an N-linked (GlcNAc...) asparagine glycan.

The protein belongs to the Wnt family. In terms of processing, palmitoleoylation is required for efficient binding to frizzled receptors. Depalmitoleoylation leads to Wnt signaling pathway inhibition.

The protein resides in the secreted. It localises to the extracellular space. It is found in the extracellular matrix. In terms of biological role, ligand for members of the frizzled family of seven transmembrane receptors. Functions in the canonical Wnt signaling pathway that results in activation of transcription factors of the TCF/LEF family. Functions as a upstream regulator of FGF10 expression. Plays an important role in embryonic lung development. May contribute to embryonic brain development by regulating the proliferation of dopaminergic precursors and neurons. In Nomascus leucogenys (Northern white-cheeked gibbon), this protein is Protein Wnt-2 (WNT2).